Consider the following 134-residue polypeptide: Putative thioredoxin 2 (134 aa).

The Thioredoxin domain maps to serine 3 to lysine 106. A disulfide bridge connects residues cysteine 31 and cysteine 34. The tract at residues alanine 115–glutamine 134 is disordered. The segment covering alanine 117–glutamine 134 has biased composition (low complexity).

This sequence belongs to the thioredoxin family.

Its subcellular location is the cytoplasm. Component of the thioredoxin-thioredoxin reductase system. Participates in various redox reactions through the reversible oxidation of its active center dithiol to a disulfide and catalyzes dithiol-disulfide exchange reactions. The sequence is that of Putative thioredoxin 2 (trxC) from Streptomyces coelicolor (strain ATCC BAA-471 / A3(2) / M145).